We begin with the raw amino-acid sequence, 175 residues long: Translation initiation factor IF-3 (175 aa).

This sequence belongs to the IF-3 family. In terms of assembly, monomer.

It localises to the cytoplasm. IF-3 binds to the 30S ribosomal subunit and shifts the equilibrium between 70S ribosomes and their 50S and 30S subunits in favor of the free subunits, thus enhancing the availability of 30S subunits on which protein synthesis initiation begins. The chain is Translation initiation factor IF-3 from Staphylococcus saprophyticus subsp. saprophyticus (strain ATCC 15305 / DSM 20229 / NCIMB 8711 / NCTC 7292 / S-41).